Consider the following 129-residue polypeptide: Phenazine antibiotic resistance protein EhpR (129 aa).

Positions 10 to 128 constitute a VOC domain; the sequence is TPNLQLVYVS…DGHIIRVCPL (119 aa). Residues 42–43 and Trp57 contribute to the D-alanylgriseoluteate site; that span reads RY.

In terms of assembly, homodimer.

Its function is as follows. Required for resistance to the phenazine antibiotic D-alanylgriseoluteic acid (AGA), an antibiotic produced by E.agglomerans itself, and thus protects the bacterium against phenazine toxicity. Probably binds AGA and acts as a chaperone that works in tandem with a membrane transporter for subsequent antibiotic secretion. The polypeptide is Phenazine antibiotic resistance protein EhpR (Enterobacter agglomerans (Erwinia herbicola)).